A 27-amino-acid chain; its full sequence is Ferric reductase B (27 aa).

In terms of assembly, homodimer. FAD serves as cofactor.

The enzyme catalyses 2 a Fe(II)-siderophore + NAD(+) + H(+) = 2 a Fe(III)-siderophore + NADH. Functionally, reductase activity that acts on Fe(3+)-chelates and uses both NADH and NADPH as electron donors. May play a role in iron uptake. In Paracoccus denitrificans, this protein is Ferric reductase B (ferB).